The primary structure comprises 545 residues: Pentatricopeptide repeat-containing protein At4g18840 (545 aa).

PPR repeat units lie at residues 104–138 (NGFT…PVFP), 139–173 (DKYS…GLVT), 174–204 (DVFV…MPVR), 205–239 (DAVS…NVES), 240–266 (WNFM…MPVR), 267–301 (DVVS…STEK), 303–337 (DGFT…GIEI), 338–368 (EGFL…TSKR), 369–403 (DVST…GFKP), 404–434 (NGIT…MSSV), and 440–474 (TIEH…EASI). Residues 475 to 545 (LLESLLGACK…ERVNRSLDVA (71 aa)) are type E motif.

It belongs to the PPR family. PCMP-E subfamily.

The polypeptide is Pentatricopeptide repeat-containing protein At4g18840 (PCMP-E101) (Arabidopsis thaliana (Mouse-ear cress)).